Here is a 474-residue protein sequence, read N- to C-terminus: MSISNWITTAYLITSTSFQPLYGSFSDALGRRNCLFFANGAFTIGCLACGFSKNIYMLSFMRALTGIGGGGLITLSTIVNSDVIPSSKRGIFQAFQNLLLGFGAICGASFGGTIASSIGWRWCFLIQVPISVISSILMNYYVPNQKEYNRQNSSIFQNPGKILRDIDVMGSILIITGLTLQLLYLSLGCSTSKLSWTSPSVLLLLVGSVIILLLFILHERKTSARAIIPMELVNSSYSVVVLSISILVGFASYAYLFTLPLFFQIVLGDSTAKAGLRLTIPSLFTPVGSLITGFSMSKYNCLRLLLYIGISLMFLGNFLFLFIEKTSPNWLIGLFLIPANLGQGITFPTTLFTFIFMFSKSDQATATSTLYLFRSIGSVWGVAISAGVIQLSFAGLLRSNLKGLLDENKIKKLIVQLSANSSYIGSLHGEVKNTVIKSFDEATKRAHLMSTLLSSLALILCILKDNLAKPKTRR.

The Cytoplasmic segment spans residues 1–33 (MSISNWITTAYLITSTSFQPLYGSFSDALGRRN). A helical transmembrane segment spans residues 34–54 (CLFFANGAFTIGCLACGFSKN). Residues 55–62 (IYMLSFMR) lie on the Vacuolar side of the membrane. A helical membrane pass occupies residues 63-85 (ALTGIGGGGLITLSTIVNSDVIP). The Cytoplasmic portion of the chain corresponds to 86-97 (SSKRGIFQAFQN). A helical transmembrane segment spans residues 98–118 (LLLGFGAICGASFGGTIASSI). Topologically, residues 119 to 121 (GWR) are vacuolar. The chain crosses the membrane as a helical span at residues 122–142 (WCFLIQVPISVISSILMNYYV). The Cytoplasmic segment spans residues 143–167 (PNQKEYNRQNSSIFQNPGKILRDID). The chain crosses the membrane as a helical span at residues 168 to 188 (VMGSILIITGLTLQLLYLSLG). Residues 189–196 (CSTSKLSW) lie on the Vacuolar side of the membrane. Residues 197 to 217 (TSPSVLLLLVGSVIILLLFIL) traverse the membrane as a helical segment. Over 218 to 238 (HERKTSARAIIPMELVNSSYS) the chain is Cytoplasmic. The chain crosses the membrane as a helical span at residues 239–259 (VVVLSISILVGFASYAYLFTL). Residues 260 to 273 (PLFFQIVLGDSTAK) are Vacuolar-facing. The chain crosses the membrane as a helical span at residues 274 to 294 (AGLRLTIPSLFTPVGSLITGF). Topologically, residues 295–303 (SMSKYNCLR) are cytoplasmic. The chain crosses the membrane as a helical span at residues 304–324 (LLLYIGISLMFLGNFLFLFIE). At 325–331 (KTSPNWL) the chain is on the vacuolar side. A helical membrane pass occupies residues 332–352 (IGLFLIPANLGQGITFPTTLF). At 353-375 (TFIFMFSKSDQATATSTLYLFRS) the chain is on the cytoplasmic side. Residues 376–396 (IGSVWGVAISAGVIQLSFAGL) form a helical membrane-spanning segment. The Vacuolar segment spans residues 397–447 (LRSNLKGLLDENKIKKLIVQLSANSSYIGSLHGEVKNTVIKSFDEATKRAH). Asparagine 420 carries an N-linked (GlcNAc...) asparagine glycan. A helical transmembrane segment spans residues 448 to 468 (LMSTLLSSLALILCILKDNLA). Topologically, residues 469–474 (KPKTRR) are cytoplasmic.

The protein belongs to the major facilitator superfamily.

The protein resides in the vacuole membrane. Its function is as follows. Transporter required for vacuolar uptake of histidine, arginine and lysine and to a lesser extent tyrosine. The sequence is that of Vacuolar basic amino acid transporter 2 (VBA2) from Saccharomyces cerevisiae (strain ATCC 204508 / S288c) (Baker's yeast).